The primary structure comprises 89 residues: Conotoxin Bu5 (89 aa).

A signal peptide spans 1–22 (MKLTCVLIVAVLFLTACQLATA). The propeptide occupies 23-49 (ENSREEQGYSAVRSSDQIQDSDLKLTK). 3 disulfides stabilise this stretch: Cys51-Cys66, Cys58-Cys70, and Cys65-Cys79. Residue Cys79 is modified to Cysteine amide. Positions 80-89 (GVSIDYYDSR) are excised as a propeptide.

The protein belongs to the conotoxin O1 superfamily. As to expression, expressed by the venom duct.

The protein localises to the secreted. This is Conotoxin Bu5 from Conus bullatus (Bubble cone).